Reading from the N-terminus, the 506-residue chain is 2,3-bisphosphoglycerate-independent phosphoglycerate mutase (506 aa).

D13 and S63 together coordinate Mn(2+). S63 functions as the Phosphoserine intermediate in the catalytic mechanism. Substrate contacts are provided by residues H124, 153-154, R183, R189, 255-258, and K331; these read RD and RADR. Residues D397, H401, D438, H439, and H457 each contribute to the Mn(2+) site.

This sequence belongs to the BPG-independent phosphoglycerate mutase family. As to quaternary structure, monomer. It depends on Mn(2+) as a cofactor.

It catalyses the reaction (2R)-2-phosphoglycerate = (2R)-3-phosphoglycerate. It participates in carbohydrate degradation; glycolysis; pyruvate from D-glyceraldehyde 3-phosphate: step 3/5. Its function is as follows. Catalyzes the interconversion of 2-phosphoglycerate and 3-phosphoglycerate. In Ruegeria sp. (strain TM1040) (Silicibacter sp.), this protein is 2,3-bisphosphoglycerate-independent phosphoglycerate mutase.